Here is a 194-residue protein sequence, read N- to C-terminus: Imidazoleglycerol-phosphate dehydratase (194 aa).

Belongs to the imidazoleglycerol-phosphate dehydratase family.

The protein localises to the cytoplasm. It catalyses the reaction D-erythro-1-(imidazol-4-yl)glycerol 3-phosphate = 3-(imidazol-4-yl)-2-oxopropyl phosphate + H2O. It functions in the pathway amino-acid biosynthesis; L-histidine biosynthesis; L-histidine from 5-phospho-alpha-D-ribose 1-diphosphate: step 6/9. The sequence is that of Imidazoleglycerol-phosphate dehydratase from Thermoanaerobacter pseudethanolicus (strain ATCC 33223 / 39E) (Clostridium thermohydrosulfuricum).